Consider the following 149-residue polypeptide: MKVVLQRVSKASVKIDDQVKGAINKGYVLLVGVADGDEQADIDYLVRKIHNLRIFEDESGRMNRSIEDVSGAILSISQFTLFADTKKGNRPSFTKAGAPEFATVMYNQFNATLRESGLQVETGEFGADMQVSLTNDGPVTILFDTKSAQ.

A Gly-cisPro motif, important for rejection of L-amino acids motif is present at residues 137–138; the sequence is GP.

Belongs to the DTD family. Homodimer.

The protein localises to the cytoplasm. It carries out the reaction glycyl-tRNA(Ala) + H2O = tRNA(Ala) + glycine + H(+). The enzyme catalyses a D-aminoacyl-tRNA + H2O = a tRNA + a D-alpha-amino acid + H(+). Its function is as follows. An aminoacyl-tRNA editing enzyme that deacylates mischarged D-aminoacyl-tRNAs. Also deacylates mischarged glycyl-tRNA(Ala), protecting cells against glycine mischarging by AlaRS. Acts via tRNA-based rather than protein-based catalysis; rejects L-amino acids rather than detecting D-amino acids in the active site. By recycling D-aminoacyl-tRNA to D-amino acids and free tRNA molecules, this enzyme counteracts the toxicity associated with the formation of D-aminoacyl-tRNA entities in vivo and helps enforce protein L-homochirality. This chain is D-aminoacyl-tRNA deacylase, found in Leuconostoc mesenteroides subsp. mesenteroides (strain ATCC 8293 / DSM 20343 / BCRC 11652 / CCM 1803 / JCM 6124 / NCDO 523 / NBRC 100496 / NCIMB 8023 / NCTC 12954 / NRRL B-1118 / 37Y).